The primary structure comprises 288 residues: ATP synthase gamma chain (288 aa).

The protein belongs to the ATPase gamma chain family. In terms of assembly, F-type ATPases have 2 components, CF(1) - the catalytic core - and CF(0) - the membrane proton channel. CF(1) has five subunits: alpha(3), beta(3), gamma(1), delta(1), epsilon(1). CF(0) has three main subunits: a, b and c.

It is found in the cell inner membrane. Functionally, produces ATP from ADP in the presence of a proton gradient across the membrane. The gamma chain is believed to be important in regulating ATPase activity and the flow of protons through the CF(0) complex. This Rickettsia canadensis (strain McKiel) protein is ATP synthase gamma chain.